A 104-amino-acid chain; its full sequence is MSNFEIRVNESYESFKNIDCFENACVVIDNMLRVLENPKNMNIYWKKIVPMIPKAYYDRDPKSDTKEELLYLVCSNSFYLDELFEKAEDEQAINALSKCEQECC.

It belongs to the CowN family.

Functionally, is required to sustain N(2)-dependent growth in the presence of low levels of carbon monoxide (CO). Probably acts by protecting the N(2) fixation ability of the nitrogenase complex, which is inactivated in the presence of CO. In Arcobacter nitrofigilis (strain ATCC 33309 / DSM 7299 / CCUG 15893 / LMG 7604 / NCTC 12251 / CI) (Campylobacter nitrofigilis), this protein is N(2)-fixation sustaining protein CowN.